We begin with the raw amino-acid sequence, 284 residues long: RNase adapter protein RapZ (284 aa).

An ATP-binding site is contributed by 8-15; it reads GRSGSGKS. 56–59 contacts GTP; it reads DVRN. An RNA-binding region spans residues 266 to 284; sequence RSRGKNVQSRHRTLEKRKP.

It belongs to the RapZ-like family. RapZ subfamily. As to quaternary structure, homotrimer.

Its function is as follows. Modulates the synthesis of GlmS, by affecting the processing and stability of the regulatory small RNA GlmZ. When glucosamine-6-phosphate (GlcN6P) concentrations are high in the cell, RapZ binds GlmZ and targets it to cleavage by RNase E. Consequently, GlmZ is inactivated and unable to activate GlmS synthesis. Under low GlcN6P concentrations, RapZ is sequestered and inactivated by an other regulatory small RNA, GlmY, preventing GlmZ degradation and leading to synthesis of GlmS. The sequence is that of RNase adapter protein RapZ from Shigella boydii serotype 18 (strain CDC 3083-94 / BS512).